The following is a 466-amino-acid chain: Glutamate--tRNA ligase 1 (466 aa).

The short motif at Pro9–Gly19 is the 'HIGH' region element. Zn(2+)-binding residues include Cys98, Cys100, Cys125, and Glu127. Residues Lys236–Arg240 carry the 'KMSKS' region motif. Lys239 contacts ATP.

It belongs to the class-I aminoacyl-tRNA synthetase family. Glutamate--tRNA ligase type 1 subfamily. In terms of assembly, monomer. Requires Zn(2+) as cofactor.

The protein localises to the cytoplasm. It carries out the reaction tRNA(Glu) + L-glutamate + ATP = L-glutamyl-tRNA(Glu) + AMP + diphosphate. Its function is as follows. Catalyzes the attachment of glutamate to tRNA(Glu) in a two-step reaction: glutamate is first activated by ATP to form Glu-AMP and then transferred to the acceptor end of tRNA(Glu). This is Glutamate--tRNA ligase 1 from Acidithiobacillus ferrooxidans (strain ATCC 53993 / BNL-5-31) (Leptospirillum ferrooxidans (ATCC 53993)).